A 404-amino-acid polypeptide reads, in one-letter code: Pyrophosphate--fructose 6-phosphate 1-phosphotransferase (404 aa).

Gly13 is a diphosphate binding site. Position 108 (Asn108) interacts with Mg(2+). Substrate contacts are provided by residues 136–138, 180–182, Glu237, and 295–298; these read TID, MGR, and YLQR. Asp138 functions as the Proton acceptor in the catalytic mechanism.

It belongs to the phosphofructokinase type A (PFKA) family. PPi-dependent PFK group II subfamily. Clade 'B2' sub-subfamily. Homodimer. The cofactor is Mg(2+).

Its subcellular location is the cytoplasm. The enzyme catalyses beta-D-fructose 6-phosphate + diphosphate = beta-D-fructose 1,6-bisphosphate + phosphate + H(+). The protein operates within carbohydrate degradation; glycolysis; D-glyceraldehyde 3-phosphate and glycerone phosphate from D-glucose: step 3/4. With respect to regulation, non-allosteric. Catalyzes the phosphorylation of D-fructose 6-phosphate, the first committing step of glycolysis. Uses inorganic phosphate (PPi) as phosphoryl donor instead of ATP like common ATP-dependent phosphofructokinases (ATP-PFKs), which renders the reaction reversible, and can thus function both in glycolysis and gluconeogenesis. Consistently, PPi-PFK can replace the enzymes of both the forward (ATP-PFK) and reverse (fructose-bisphosphatase (FBPase)) reactions. The polypeptide is Pyrophosphate--fructose 6-phosphate 1-phosphotransferase (Rhodospirillum rubrum (strain ATCC 11170 / ATH 1.1.1 / DSM 467 / LMG 4362 / NCIMB 8255 / S1)).